We begin with the raw amino-acid sequence, 209 residues long: C-type lectin domain family 6 member A (209 aa).

Topologically, residues 1-20 (MMQEQQPQSTEKRGWLSLRL) are cytoplasmic. A helical; Signal-anchor for type II membrane protein transmembrane segment spans residues 21–41 (WSVAGISIALLSACFIVSCVV). Residues 42–209 (TYHFTYGETG…SICEMNKIYL (168 aa)) lie on the Extracellular side of the membrane. Disulfide bonds link Cys66–Cys78, Cys79–Cys90, Cys107–Cys202, and Cys176–Cys194. The region spanning 86–203 (FGSSCYFISS…CETRRNSICE (118 aa)) is the C-type lectin domain. Val116, Asn118, and Glu122 together coordinate Ca(2+). An N-linked (GlcNAc...) asparagine glycan is attached at Asn131. 3 residues coordinate Ca(2+): Glu168, Asn170, and Glu174. Alpha-D-mannopyranose contacts are provided by residues 168–170 (EPN), Glu174, Trp182, 190–191 (ND), and Arg198. The N-linked (GlcNAc...) asparagine glycan is linked to Asn170. The Ca(2+) site is built by Asn190 and Asp191. Residue Glu203 coordinates Ca(2+).

As to quaternary structure, associated with FCER1G. Heterodimer with CLEC4D; this heterodimer forms a pattern recognition receptor (PRR) against fungal infection. Expressed in lung, spleen, lymph node, leukocytes, bone marrow, tonsils and dendritic cells. Strongly expressed in purified monocytes and weakly in B-cells. In peripheral blood cells, preferentially expressed in plasmacytoids rather than myeloids.

It localises to the cell membrane. In terms of biological role, calcium-dependent lectin that acts as a pattern recognition receptor (PRR) of the innate immune system: specifically recognizes and binds alpha-mannans on C.albicans hypheas. Binding of C.albicans alpha-mannans to this receptor complex leads to phosphorylation of the immunoreceptor tyrosine-based activation motif (ITAM) of FCER1G, triggering activation of SYK, CARD9 and NF-kappa-B, consequently driving maturation of antigen-presenting cells and shaping antigen-specific priming of T-cells toward effector T-helper 1 and T-helper 17 cell subtypes. Recognizes also, in a mannose-dependent manner, allergens from house dust mite and fungi, by promoting cysteinyl leukotriene production. Recognizes soluble elements from the eggs of Shistosoma mansoni altering adaptive immune responses. The protein is C-type lectin domain family 6 member A of Homo sapiens (Human).